Reading from the N-terminus, the 899-residue chain is Proline-rich transmembrane protein 4 (899 aa).

Positions 1-23 (MARHGCLGLGLFCCVLFAATVGP) are cleaved as a signal peptide. Disordered stretches follow at residues 110–152 (LTEW…RRST) and 295–340 (TVPI…PEAP). The next 5 membrane-spanning stretches (helical) occupy residues 370 to 390 (VGALFGLVALLALLALALLPW), 392 to 412 (CPPGAPCLALLDLLLLSAGTT), 430 to 450 (ALAWLLLQDLPLPCLAAGLGL), 467 to 487 (LAALLLLGLGLAAAAALGSAA), and 500 to 520 (GLHAFLAAFLSGLLLALSCWG). Ser-641 is subject to Phosphoserine. Disordered stretches follow at residues 769–797 (TGGRASERSGEASGPAAPPELPSPGAWPA) and 839–869 (PSGSSPSLPASGSYQALSPPSRDSPEPASEL). Residues 840-851 (SGSSPSLPASGS) show a composition bias toward low complexity.

Its subcellular location is the membrane. This Homo sapiens (Human) protein is Proline-rich transmembrane protein 4 (PRRT4).